A 96-amino-acid chain; its full sequence is Small ribosomal subunit protein bS18c (96 aa).

It belongs to the bacterial ribosomal protein bS18 family. As to quaternary structure, part of the 30S ribosomal subunit.

It is found in the plastid. It localises to the chloroplast. In Pinus thunbergii (Japanese black pine), this protein is Small ribosomal subunit protein bS18c (rps18).